Reading from the N-terminus, the 146-residue chain is Dihydroneopterin aldolase 1 (146 aa).

Residues Glu-41, Tyr-73, and 92–93 each bind substrate; that span reads LE. The Proton donor/acceptor role is filled by Lys-119.

Belongs to the DHNA family. Homooctamer. Forms a hollow cylinder assembled from two ring-shaped tetramers. As to expression, expressed in roots, leaves, stems and siliques.

It carries out the reaction 7,8-dihydroneopterin = 6-hydroxymethyl-7,8-dihydropterin + glycolaldehyde. Its pathway is cofactor biosynthesis; tetrahydrofolate biosynthesis; 2-amino-4-hydroxy-6-hydroxymethyl-7,8-dihydropteridine diphosphate from 7,8-dihydroneopterin triphosphate: step 3/4. Catalyzes the conversion of 7,8-dihydroneopterin into 6-hydroxymethyl-7,8-dihydropterin, a biosynthetic precursor of the vitamin tetrahydrofolate. Can use L-threo-dihydroneopterin and D-erythro-dihydroneopterin as substrates for the formation of 6-hydroxymethyldihydropterin, but it can also catalyze the epimerization of carbon 2' of dihydroneopterin and dihydromonapterin. In Arabidopsis thaliana (Mouse-ear cress), this protein is Dihydroneopterin aldolase 1.